A 119-amino-acid polypeptide reads, in one-letter code: Holo-[acyl-carrier-protein] synthase (119 aa).

2 residues coordinate Mg(2+): aspartate 8 and glutamate 58.

It belongs to the P-Pant transferase superfamily. AcpS family. It depends on Mg(2+) as a cofactor.

The protein localises to the cytoplasm. It carries out the reaction apo-[ACP] + CoA = holo-[ACP] + adenosine 3',5'-bisphosphate + H(+). Functionally, transfers the 4'-phosphopantetheine moiety from coenzyme A to a Ser of acyl-carrier-protein. This is Holo-[acyl-carrier-protein] synthase from Streptococcus thermophilus (strain ATCC BAA-491 / LMD-9).